The following is a 655-amino-acid chain: p-hydroxybenzoic acid efflux pump subunit AaeB (655 aa).

11 consecutive transmembrane segments (helical) span residues 13-33 (FAVK…HFQL), 38-58 (WAVL…GGEP), 69-89 (LRII…IAMI), 93-113 (LLMI…SSLV), 121-141 (WGLA…EPLL), 152-172 (EIVI…PRSI), 370-390 (LFWL…IAVV), 407-427 (FIYG…VIIP), 431-451 (QSML…GIEV), 459-479 (MGAL…TFHF), and 482-502 (FLDS…VILL).

Belongs to the aromatic acid exporter ArAE (TC 2.A.85) family.

Its subcellular location is the cell inner membrane. Its function is as follows. Forms an efflux pump with AaeA. Could function as a metabolic relief valve, allowing to eliminate certain compounds when they accumulate to high levels in the cell. The sequence is that of p-hydroxybenzoic acid efflux pump subunit AaeB from Shigella boydii serotype 18 (strain CDC 3083-94 / BS512).